The primary structure comprises 470 residues: Nuclear receptor subfamily 0 group B member 1 (470 aa).

3 tandem repeats follow at residues 1 to 67 (MAGE…YRCC), 68 to 133 (FCGK…YRCC), and 134 to 200 (FCGE…YRCC). A 4 X 67 AA tandem repeats region spans residues 1 to 253 (MAGENHQWQG…RPVALKSPQV (253 aa)). 3 short sequence motifs (LXXLL motif) span residues 13-17 (LYNML), 80-84 (LYSML), and 146-150 (LYSLL). One copy of the 4; truncated repeat lies at 201–253 (FCGEDHPQQGSTLYCMPTSTNQAQAAPEERPRAPWWDTSSGALRPVALKSPQV). The region spanning 205–469 (DHPQQGSTLY…DMMLEMLCTK (265 aa)) is the NR LBD domain. An AF-2 motif motif is present at residues 461–466 (MMLEML).

It belongs to the nuclear hormone receptor family. NR0 subfamily. In terms of assembly, homodimer. Interacts with NR5A1, NR5A2, NR0B2 and with COPS2. Interacts with ESRRB; represses ESRRB activity at the GATA6 promoter.

Its subcellular location is the nucleus. The protein localises to the cytoplasm. Nuclear receptor that lacks a DNA-binding domain and acts as a corepressor that inhibits the transcriptional activity of other nuclear receptors through heterodimeric interactions. Component of a cascade required for the development of the hypothalamic-pituitary-adrenal-gonadal axis. May also have a role in the development of the embryo and in the maintenance of embryonic stem cell pluripotency. The chain is Nuclear receptor subfamily 0 group B member 1 (NR0B1) from Pan troglodytes (Chimpanzee).